A 227-amino-acid chain; its full sequence is Cytochrome c oxidase subunit 2 (227 aa).

The Mitochondrial intermembrane portion of the chain corresponds to 1-26 (MSTWKNLFLQDSASPLMELLMCFHDH). Residues 27–48 (AMLILILITIMVSQMLLSMLFN) traverse the membrane as a helical segment. Residues 49–62 (KLSHRYLLEGQLIE) are Mitochondrial matrix-facing. A helical membrane pass occupies residues 63 to 82 (TIWTIIPAIILILIALPSLR). The Mitochondrial intermembrane portion of the chain corresponds to 83–227 (LLYILDEINN…LFLNWVISKA (145 aa)). Cu cation-binding residues include His-161, Cys-196, Glu-198, Cys-200, His-204, and Met-207. A Mg(2+)-binding site is contributed by Glu-198.

Belongs to the cytochrome c oxidase subunit 2 family. As to quaternary structure, component of the cytochrome c oxidase (complex IV, CIV), a multisubunit enzyme composed of a catalytic core of 3 subunits and several supernumerary subunits. The complex exists as a monomer or a dimer and forms supercomplexes (SCs) in the inner mitochondrial membrane with ubiquinol-cytochrome c oxidoreductase (cytochrome b-c1 complex, complex III, CIII). Requires Cu cation as cofactor.

It is found in the mitochondrion inner membrane. It catalyses the reaction 4 Fe(II)-[cytochrome c] + O2 + 8 H(+)(in) = 4 Fe(III)-[cytochrome c] + 2 H2O + 4 H(+)(out). In terms of biological role, component of the cytochrome c oxidase, the last enzyme in the mitochondrial electron transport chain which drives oxidative phosphorylation. The respiratory chain contains 3 multisubunit complexes succinate dehydrogenase (complex II, CII), ubiquinol-cytochrome c oxidoreductase (cytochrome b-c1 complex, complex III, CIII) and cytochrome c oxidase (complex IV, CIV), that cooperate to transfer electrons derived from NADH and succinate to molecular oxygen, creating an electrochemical gradient over the inner membrane that drives transmembrane transport and the ATP synthase. Cytochrome c oxidase is the component of the respiratory chain that catalyzes the reduction of oxygen to water. Electrons originating from reduced cytochrome c in the intermembrane space (IMS) are transferred via the dinuclear copper A center (CU(A)) of subunit 2 and heme A of subunit 1 to the active site in subunit 1, a binuclear center (BNC) formed by heme A3 and copper B (CU(B)). The BNC reduces molecular oxygen to 2 water molecules using 4 electrons from cytochrome c in the IMS and 4 protons from the mitochondrial matrix. In Sitophilus granarius (Granary weevil), this protein is Cytochrome c oxidase subunit 2 (COII).